We begin with the raw amino-acid sequence, 122 residues long: Vitelline membrane protein Vm32E (122 aa).

The N-terminal stretch at 1–19 is a signal peptide; sequence MKTVAFLAVVVLFAAFACA. The 40-residue stretch at 40–79 folds into the VM domain; that stretch reads SVPAPPCPKNYLFSCQPNLVPAPCAQQAAPAAYGSAGAYT.

This sequence belongs to the vitelline membrane family.

Its subcellular location is the secreted. Its function is as follows. Major early eggshell protein. The protein is Vitelline membrane protein Vm32E of Drosophila persimilis (Fruit fly).